We begin with the raw amino-acid sequence, 1581 residues long: Pentafunctional AROM polypeptide (1581 aa).

A 3-dehydroquinate synthase region spans residues 1–384 (MPEPTKISIL…YEPKASVVPN (384 aa)). NAD(+) is bound by residues 44-46 (DTN), 81-84 (EVSK), 114-116 (GGV), and Asp119. Arg130 is a binding site for 7-phospho-2-dehydro-3-deoxy-D-arabino-heptonate. 139-140 (TT) serves as a coordination point for NAD(+). Residues Asp146 and Lys152 each contribute to the 7-phospho-2-dehydro-3-deoxy-D-arabino-heptonate site. An NAD(+)-binding site is contributed by Lys161. Asn162 contacts 7-phospho-2-dehydro-3-deoxy-D-arabino-heptonate. NAD(+)-binding positions include 179 to 182 (FLET) and Asn190. Position 194 (Glu194) interacts with Zn(2+). 7-phospho-2-dehydro-3-deoxy-D-arabino-heptonate-binding positions include 194-197 (EVIK) and Lys250. Residue Glu260 is the Proton acceptor; for 3-dehydroquinate synthase activity of the active site. 7-phospho-2-dehydro-3-deoxy-D-arabino-heptonate is bound by residues 264–268 (RNLLN) and His271. A Zn(2+)-binding site is contributed by His271. The active-site Proton acceptor; for 3-dehydroquinate synthase activity is the His275. Positions 287 and 356 each coordinate 7-phospho-2-dehydro-3-deoxy-D-arabino-heptonate. His287 contributes to the Zn(2+) binding site. Residues 397 to 842 (VHPGVPKESN…WDTLRQLFSV (446 aa)) form an EPSP synthase region. The active-site For EPSP synthase activity is the Cys824. Residues 864 to 1056 (SASVFIIGMR…KQKKHSFFVS (193 aa)) are shikimate kinase. 871–878 (GMRGAGKT) is an ATP binding site. The 3-dehydroquinase stretch occupies residues 1057 to 1277 (LTLPDLRSAS…AAPGQLSATE (221 aa)). The active-site Proton acceptor; for 3-dehydroquinate dehydratase activity is His1180. The Schiff-base intermediate with substrate; for 3-dehydroquinate dehydratase activity role is filled by Lys1208. Residues 1290-1581 (KKRFAIFGNP…ARTAVLGDSA (292 aa)) are shikimate dehydrogenase.

The protein in the N-terminal section; belongs to the sugar phosphate cyclases superfamily. Dehydroquinate synthase family. This sequence in the 2nd section; belongs to the EPSP synthase family. In the 3rd section; belongs to the shikimate kinase family. It in the 4th section; belongs to the type-I 3-dehydroquinase family. The protein in the C-terminal section; belongs to the shikimate dehydrogenase family. As to quaternary structure, homodimer. It depends on Zn(2+) as a cofactor.

The protein localises to the cytoplasm. The enzyme catalyses 7-phospho-2-dehydro-3-deoxy-D-arabino-heptonate = 3-dehydroquinate + phosphate. It carries out the reaction 3-dehydroquinate = 3-dehydroshikimate + H2O. It catalyses the reaction shikimate + NADP(+) = 3-dehydroshikimate + NADPH + H(+). The catalysed reaction is shikimate + ATP = 3-phosphoshikimate + ADP + H(+). The enzyme catalyses 3-phosphoshikimate + phosphoenolpyruvate = 5-O-(1-carboxyvinyl)-3-phosphoshikimate + phosphate. The protein operates within metabolic intermediate biosynthesis; chorismate biosynthesis; chorismate from D-erythrose 4-phosphate and phosphoenolpyruvate: step 2/7. It participates in metabolic intermediate biosynthesis; chorismate biosynthesis; chorismate from D-erythrose 4-phosphate and phosphoenolpyruvate: step 3/7. Its pathway is metabolic intermediate biosynthesis; chorismate biosynthesis; chorismate from D-erythrose 4-phosphate and phosphoenolpyruvate: step 4/7. It functions in the pathway metabolic intermediate biosynthesis; chorismate biosynthesis; chorismate from D-erythrose 4-phosphate and phosphoenolpyruvate: step 5/7. The protein operates within metabolic intermediate biosynthesis; chorismate biosynthesis; chorismate from D-erythrose 4-phosphate and phosphoenolpyruvate: step 6/7. In terms of biological role, the AROM polypeptide catalyzes 5 consecutive enzymatic reactions in prechorismate polyaromatic amino acid biosynthesis. The chain is Pentafunctional AROM polypeptide from Aspergillus terreus (strain NIH 2624 / FGSC A1156).